A 249-amino-acid polypeptide reads, in one-letter code: Urease accessory protein UreG (249 aa).

The segment covering 1–13 (MHLGHEEFQRTDG) has biased composition (basic and acidic residues). The tract at residues 1-34 (MHLGHEEFQRTDGRASTGPADAGPAGAGRAPRIG) is disordered. Residues 18-33 (GPADAGPAGAGRAPRI) are compositionally biased toward low complexity. 37–44 (GPVGSGKT) contributes to the GTP binding site. The tract at residues 229 to 249 (PRGGSYDASDASNASQPLNRM) is disordered. The span at 238-249 (DASNASQPLNRM) shows a compositional bias: polar residues.

The protein belongs to the SIMIBI class G3E GTPase family. UreG subfamily. Homodimer. UreD, UreF and UreG form a complex that acts as a GTP-hydrolysis-dependent molecular chaperone, activating the urease apoprotein by helping to assemble the nickel containing metallocenter of UreC. The UreE protein probably delivers the nickel.

The protein resides in the cytoplasm. Functionally, facilitates the functional incorporation of the urease nickel metallocenter. This process requires GTP hydrolysis, probably effectuated by UreG. This chain is Urease accessory protein UreG, found in Frankia casuarinae (strain DSM 45818 / CECT 9043 / HFP020203 / CcI3).